The following is a 70-amino-acid chain: DNA-directed RNA polymerase subunit epsilon (70 aa).

This sequence belongs to the RNA polymerase subunit epsilon family. As to quaternary structure, RNAP is composed of a core of 2 alpha, a beta and a beta' subunit. The core is associated with a delta subunit, and at least one of epsilon or omega. When a sigma factor is associated with the core the holoenzyme is formed, which can initiate transcription.

It carries out the reaction RNA(n) + a ribonucleoside 5'-triphosphate = RNA(n+1) + diphosphate. Functionally, a non-essential component of RNA polymerase (RNAP). This chain is DNA-directed RNA polymerase subunit epsilon, found in Bacillus cytotoxicus (strain DSM 22905 / CIP 110041 / 391-98 / NVH 391-98).